The primary structure comprises 575 residues: MPQTTDEAASVSTVADIKPRSRDVTDGLEKAAARGMLRAVGMDDEDFAKPQIGVASSWNEITPCNLSLDRLANAVKEGVFSAGGYPLEFGTISVSDGISMGHEGMHFSLVSREVIADSVEVVMQAERLDGSVLLAGCDKSLPGMLMAAARLDLAAVFLYAGSILPGRAKLSDGSERDVTIIDAFEAVGACSRGLMSRADVDAIERAICPGEGACGGMYTANTMASAAEALGMSLPGSAAPPATDRRRDGFARRSGQAVVELLRRGITARDILTKEAFENAIAVVMAFGGSTNAVLHLLAIAHEANVALSLQDFSRIGSGVPHLADVKPFGRHVMSDVDHIGGVPVVMKALLDAGLLHGDCLTVTGHTMAENLAAITPPDPDGKVLRALANPIHPSGGITILHGSLAPEGAVVKTAGFDSDVFEGTARVFDGERAALDALEDGTITVGDAVVIRYEGPKGGPGMREMLAITGAIKGAGLGKDVLLLTDGRFSGGTTGLCVGHIAPEAVDGGPIALLRNGDRIRLDVAGRVLDVLADPAEFASRQQDFSPPPPRYTTGVLSKYVKLVSSAAVGAVCG.

C64 serves as a coordination point for [2Fe-2S] cluster. D96 serves as a coordination point for Mg(2+). Residue C137 participates in [2Fe-2S] cluster binding. D138 and K139 together coordinate Mg(2+). Position 139 is an N6-carboxylysine (K139). C214 serves as a coordination point for [2Fe-2S] cluster. E465 provides a ligand contact to Mg(2+). The active-site Proton acceptor is S491.

The protein belongs to the IlvD/Edd family. In terms of assembly, homodimer. [2Fe-2S] cluster serves as cofactor. Mg(2+) is required as a cofactor.

It catalyses the reaction (2R)-2,3-dihydroxy-3-methylbutanoate = 3-methyl-2-oxobutanoate + H2O. The catalysed reaction is (2R,3R)-2,3-dihydroxy-3-methylpentanoate = (S)-3-methyl-2-oxopentanoate + H2O. Its pathway is amino-acid biosynthesis; L-isoleucine biosynthesis; L-isoleucine from 2-oxobutanoate: step 3/4. The protein operates within amino-acid biosynthesis; L-valine biosynthesis; L-valine from pyruvate: step 3/4. In terms of biological role, functions in the biosynthesis of branched-chain amino acids. Catalyzes the dehydration of (2R,3R)-2,3-dihydroxy-3-methylpentanoate (2,3-dihydroxy-3-methylvalerate) into 2-oxo-3-methylpentanoate (2-oxo-3-methylvalerate) and of (2R)-2,3-dihydroxy-3-methylbutanoate (2,3-dihydroxyisovalerate) into 2-oxo-3-methylbutanoate (2-oxoisovalerate), the penultimate precursor to L-isoleucine and L-valine, respectively. The chain is Dihydroxy-acid dehydratase from Mycobacterium bovis (strain ATCC BAA-935 / AF2122/97).